A 380-amino-acid polypeptide reads, in one-letter code: Cytochrome b (380 aa).

4 consecutive transmembrane segments (helical) span residues 34–54 (FGSL…LLAM), 78–99 (WLIR…YLHI), 114–134 (WNTG…GYVL), and 179–199 (FFAL…IHLT). 2 residues coordinate heme b: H84 and H98. Heme b contacts are provided by H183 and H197. H202 is an a ubiquinone binding site. The next 4 membrane-spanning stretches (helical) occupy residues 227-247 (LKDI…ALFS), 289-309 (LGGV…PFLH), 321-341 (LSQL…WVGS), and 348-368 (FIII…ILFP).

This sequence belongs to the cytochrome b family. In terms of assembly, the cytochrome bc1 complex contains 11 subunits: 3 respiratory subunits (MT-CYB, CYC1 and UQCRFS1), 2 core proteins (UQCRC1 and UQCRC2) and 6 low-molecular weight proteins (UQCRH/QCR6, UQCRB/QCR7, UQCRQ/QCR8, UQCR10/QCR9, UQCR11/QCR10 and a cleavage product of UQCRFS1). This cytochrome bc1 complex then forms a dimer. Heme b serves as cofactor.

The protein resides in the mitochondrion inner membrane. In terms of biological role, component of the ubiquinol-cytochrome c reductase complex (complex III or cytochrome b-c1 complex) that is part of the mitochondrial respiratory chain. The b-c1 complex mediates electron transfer from ubiquinol to cytochrome c. Contributes to the generation of a proton gradient across the mitochondrial membrane that is then used for ATP synthesis. This is Cytochrome b (MT-CYB) from Macronectes giganteus (Southern giant petrel).